The chain runs to 166 residues: NAD(P)H-quinone oxidoreductase subunit I, chloroplastic (166 aa).

4Fe-4S ferredoxin-type domains lie at 55-84 (GRIHFEFDKCIACEVCVRVCPIDLPVVDWK) and 95-124 (LNYSIDFGICIFCGNCVEYCPTNCLSMTEE). The [4Fe-4S] cluster site is built by cysteine 64, cysteine 67, cysteine 70, cysteine 74, cysteine 104, cysteine 107, cysteine 110, and cysteine 114.

It belongs to the complex I 23 kDa subunit family. NDH is composed of at least 16 different subunits, 5 of which are encoded in the nucleus. The cofactor is [4Fe-4S] cluster.

The protein localises to the plastid. Its subcellular location is the chloroplast thylakoid membrane. It carries out the reaction a plastoquinone + NADH + (n+1) H(+)(in) = a plastoquinol + NAD(+) + n H(+)(out). The catalysed reaction is a plastoquinone + NADPH + (n+1) H(+)(in) = a plastoquinol + NADP(+) + n H(+)(out). Functionally, NDH shuttles electrons from NAD(P)H:plastoquinone, via FMN and iron-sulfur (Fe-S) centers, to quinones in the photosynthetic chain and possibly in a chloroplast respiratory chain. The immediate electron acceptor for the enzyme in this species is believed to be plastoquinone. Couples the redox reaction to proton translocation, and thus conserves the redox energy in a proton gradient. The sequence is that of NAD(P)H-quinone oxidoreductase subunit I, chloroplastic from Polymnia canadensis (White-flowered leaf-cup).